Consider the following 147-residue polypeptide: Small ribosomal subunit protein uS12 (147 aa).

It belongs to the universal ribosomal protein uS12 family. As to quaternary structure, part of the 30S ribosomal subunit.

Its function is as follows. With S4 and S5 plays an important role in translational accuracy. Located at the interface of the 30S and 50S subunits. This Methanococcus maripaludis (strain DSM 14266 / JCM 13030 / NBRC 101832 / S2 / LL) protein is Small ribosomal subunit protein uS12.